The sequence spans 201 residues: MADILLLDNIDSFTYNLADQLRSNGHNVVIYRNHIPAQTLIERLATMSNPVLMLSPGPGVPSEAGCMPELLTRLSGKLPIIGICLGHQAIVEAYGGYVGQAGEILHGKASSIEHDGQAMFAGLTNPLPVARYHSLVGSNIPAGLTINAHFNGMVMAVRHDADRICGFQFHPESILTTQGARLLEQTLAWAQRKLEPTNTLQ.

The Glutamine amidotransferase type-1 domain occupies 3 to 196; sequence DILLLDNIDS…LAWAQRKLEP (194 aa). 57-59 serves as a coordination point for L-glutamine; that stretch reads GPG. Cysteine 84 functions as the Nucleophile; for GATase activity in the catalytic mechanism. L-glutamine is bound by residues glutamine 88 and 134-135; that span reads SL. Active-site for GATase activity residues include histidine 170 and glutamate 172.

As to quaternary structure, tetramer of two components I and two components II.

It carries out the reaction chorismate + L-glutamine = anthranilate + pyruvate + L-glutamate + H(+). The catalysed reaction is N-(5-phospho-beta-D-ribosyl)anthranilate + diphosphate = 5-phospho-alpha-D-ribose 1-diphosphate + anthranilate. It functions in the pathway amino-acid biosynthesis; L-tryptophan biosynthesis; L-tryptophan from chorismate: step 1/5. Its pathway is amino-acid biosynthesis; L-tryptophan biosynthesis; L-tryptophan from chorismate: step 2/5. This is Anthranilate synthase component II (trpG-TRPD) from Shigella dysenteriae.